We begin with the raw amino-acid sequence, 101 residues long: uncharacterized protein (101 aa).

This is an uncharacterized protein from Mycoplasma pneumoniae (strain ATCC 29342 / M129 / Subtype 1) (Mycoplasmoides pneumoniae).